A 524-amino-acid polypeptide reads, in one-letter code: Bifunctional purine biosynthesis protein PurH (524 aa).

One can recognise an MGS-like domain in the interval 1–144 (MTRRALVSVS…KNSAHVGVVV (144 aa)).

This sequence belongs to the PurH family.

It catalyses the reaction (6R)-10-formyltetrahydrofolate + 5-amino-1-(5-phospho-beta-D-ribosyl)imidazole-4-carboxamide = 5-formamido-1-(5-phospho-D-ribosyl)imidazole-4-carboxamide + (6S)-5,6,7,8-tetrahydrofolate. The catalysed reaction is IMP + H2O = 5-formamido-1-(5-phospho-D-ribosyl)imidazole-4-carboxamide. Its pathway is purine metabolism; IMP biosynthesis via de novo pathway; 5-formamido-1-(5-phospho-D-ribosyl)imidazole-4-carboxamide from 5-amino-1-(5-phospho-D-ribosyl)imidazole-4-carboxamide (10-formyl THF route): step 1/1. The protein operates within purine metabolism; IMP biosynthesis via de novo pathway; IMP from 5-formamido-1-(5-phospho-D-ribosyl)imidazole-4-carboxamide: step 1/1. This is Bifunctional purine biosynthesis protein PurH from Anaeromyxobacter sp. (strain K).